A 77-amino-acid chain; its full sequence is Large ribosomal subunit protein eL13 (77 aa).

This sequence belongs to the eukaryotic ribosomal protein eL13 family.

The sequence is that of Large ribosomal subunit protein eL13 from Sulfurisphaera tokodaii (strain DSM 16993 / JCM 10545 / NBRC 100140 / 7) (Sulfolobus tokodaii).